The chain runs to 698 residues: Ion-translocating oxidoreductase complex subunit C (698 aa).

4Fe-4S ferredoxin-type domains are found at residues Thr-366–Tyr-397 and Lys-407–Tyr-436. [4Fe-4S] cluster is bound by residues Cys-377, Cys-380, Cys-383, Cys-387, Cys-416, Cys-419, Cys-422, and Cys-426.

This sequence belongs to the 4Fe4S bacterial-type ferredoxin family. RnfC subfamily. The complex is composed of six subunits: RnfA, RnfB, RnfC, RnfD, RnfE and RnfG. [4Fe-4S] cluster is required as a cofactor.

Its subcellular location is the cell inner membrane. In terms of biological role, part of a membrane-bound complex that couples electron transfer with translocation of ions across the membrane. This is Ion-translocating oxidoreductase complex subunit C from Yersinia pseudotuberculosis serotype O:3 (strain YPIII).